The chain runs to 216 residues: Probable transaldolase (216 aa).

The Schiff-base intermediate with substrate role is filled by lysine 83.

The protein belongs to the transaldolase family. Type 3B subfamily.

The protein resides in the cytoplasm. It catalyses the reaction D-sedoheptulose 7-phosphate + D-glyceraldehyde 3-phosphate = D-erythrose 4-phosphate + beta-D-fructose 6-phosphate. It participates in carbohydrate degradation; pentose phosphate pathway; D-glyceraldehyde 3-phosphate and beta-D-fructose 6-phosphate from D-ribose 5-phosphate and D-xylulose 5-phosphate (non-oxidative stage): step 2/3. Its function is as follows. Transaldolase is important for the balance of metabolites in the pentose-phosphate pathway. The protein is Probable transaldolase of Thermoanaerobacter sp. (strain X514).